The sequence spans 652 residues: ATP-dependent zinc metalloprotease FtsH (652 aa).

At 1-11 (MKKQNNGLIKN) the chain is on the cytoplasmic side. The helical transmembrane segment at 12 to 32 (PFLWLLFIFFLVTGFQYFYSG) threads the bilayer. Residues 33–131 (NNSGGSQQIN…EVTVKHESSS (99 aa)) lie on the Extracellular side of the membrane. The helical transmembrane segment at 132–152 (GIWINLLVSIVPFGILFFFLF) threads the bilayer. At 153–652 (SMMGNMGGGN…EVKSKMNDEK (500 aa)) the chain is on the cytoplasmic side. 227 to 234 (GPPGTGKT) provides a ligand contact to ATP. H449 provides a ligand contact to Zn(2+). E450 is an active-site residue. 2 residues coordinate Zn(2+): H453 and D525. Residues 628-652 (MPEAVEEESHALSYDEVKSKMNDEK) are disordered. Residues 634-652 (EESHALSYDEVKSKMNDEK) are compositionally biased toward basic and acidic residues.

In the central section; belongs to the AAA ATPase family. It in the C-terminal section; belongs to the peptidase M41 family. As to quaternary structure, homohexamer. The cofactor is Zn(2+).

It localises to the cell membrane. Functionally, acts as a processive, ATP-dependent zinc metallopeptidase for both cytoplasmic and membrane proteins. Plays a role in the quality control of integral membrane proteins. The polypeptide is ATP-dependent zinc metalloprotease FtsH (Streptococcus pneumoniae (strain ATCC BAA-255 / R6)).